The chain runs to 918 residues: Chitin synthase C (918 aa).

Positions M1–E63 are disordered. The segment covering N22 to L37 has biased composition (low complexity). The next 4 membrane-spanning stretches (helical) occupy residues W562–W581, L605–L625, V637–S657, and M672–V692. A glycan (N-linked (GlcNAc...) asparagine) is linked at N712. 3 consecutive transmembrane segments (helical) span residues F715 to I735, V845 to G865, and V890 to L910.

It belongs to the chitin synthase family. Class I subfamily. In terms of tissue distribution, mainly expressed in hyphae and conidiphores. Relatively strongly expressed in young cleistothecia and in mature ascospores, but negligible in Huelle cells.

It is found in the cell membrane. The protein localises to the cell septum. The protein resides in the cell tip. The enzyme catalyses [(1-&gt;4)-N-acetyl-beta-D-glucosaminyl](n) + UDP-N-acetyl-alpha-D-glucosamine = [(1-&gt;4)-N-acetyl-beta-D-glucosaminyl](n+1) + UDP + H(+). Functionally, polymerizes chitin, a structural polymer of the cell wall and septum, by transferring the sugar moiety of UDP-GlcNAc to the non-reducing end of the growing chitin polymer. ChsC and chsA share critical functions in hyphal wall integrity and differentiation. ChsA and chsC share also overlapping roles in septum formation. The sequence is that of Chitin synthase C from Emericella nidulans (strain FGSC A4 / ATCC 38163 / CBS 112.46 / NRRL 194 / M139) (Aspergillus nidulans).